A 263-amino-acid polypeptide reads, in one-letter code: Stress-response A/B barrel domain-containing protein UP3 (263 aa).

Stress-response A/B barrel domains lie at 49–142 (IEHI…AVDW) and 158–252 (VAKL…VVEF). The Peroxisomal targeting signal motif lies at 261-263 (SSL).

In terms of assembly, homodimer.

The protein resides in the peroxisome. Involved in stress response. This is Stress-response A/B barrel domain-containing protein UP3 from Arabidopsis thaliana (Mouse-ear cress).